Consider the following 169-residue polypeptide: Protein yop1 (169 aa).

Residues 1–35 (MASFQDRAQHTIAQLDKELSKYPVLNNLERQTSVP) lie on the Cytoplasmic side of the membrane. Residues 36–55 (KVYVILGLVGIYTFLVFFNI) traverse the membrane as a helical segment. Position 56 (Ala-56) is a topological domain, lumenal. A helical transmembrane segment spans residues 57–76 (GEFLVNFAGFLIPGYYSLNA). The Cytoplasmic portion of the chain corresponds to 77–86 (LFTSGKADDT). Residues 87–103 (QWLTYWVVYALLTVVES) traverse the membrane as a helical segment. The Lumenal segment spans residues 104–105 (AI). The helical transmembrane segment at 106 to 124 (NAAYWFPFYYIFKFVLILW) threads the bilayer. At 125–169 (MSLPQTNGAQVVFHSFLQPVLGRFFTSGSTSANLRAQADAASKSQ) the chain is on the cytoplasmic side.

Belongs to the DP1 family. As to quaternary structure, oligomer.

It is found in the endoplasmic reticulum membrane. It localises to the golgi apparatus membrane. Its function is as follows. Required to generate and maintain the structure of the tubular endoplasmic reticulum network and the vacuole. Induces high curvature in membranes and causes membrane tubule formation. Involved in membrane/vesicle trafficking. This is Protein yop1 (yop1) from Aspergillus fumigatus (strain ATCC MYA-4609 / CBS 101355 / FGSC A1100 / Af293) (Neosartorya fumigata).